Consider the following 116-residue polypeptide: Iron-sulfur cluster insertion protein ErpA (116 aa).

Iron-sulfur cluster contacts are provided by Cys-44, Cys-108, and Cys-110.

This sequence belongs to the HesB/IscA family. As to quaternary structure, homodimer. Requires iron-sulfur cluster as cofactor.

Its function is as follows. Required for insertion of 4Fe-4S clusters for at least IspG. The polypeptide is Iron-sulfur cluster insertion protein ErpA (Francisella tularensis subsp. mediasiatica (strain FSC147)).